We begin with the raw amino-acid sequence, 428 residues long: Protein CANDIDATE G-PROTEIN COUPLED RECEPTOR 6 (428 aa).

A signal peptide spans 1–22; that stretch reads MTILPFLAAVFVLQLLSTLTVA. Asn31, Asn89, and Asn157 each carry an N-linked (GlcNAc...) asparagine glycan. 7 helical membrane-spanning segments follow: residues 173 to 193, 202 to 222, 238 to 258, 276 to 296, 310 to 330, 356 to 376, and 385 to 405; these read LYLV…CFCW, IHLL…CAAV, IVFY…IVLI, LLVI…VIGE, IFFL…VWSM, FYVL…VMKM, and VSNA…FYMF.

This sequence belongs to the LU7TM family.

It is found in the membrane. Its function is as follows. G-protein coupled receptor. Plays a role in plants and microbes interactions. The protein is Protein CANDIDATE G-PROTEIN COUPLED RECEPTOR 6 of Arabidopsis thaliana (Mouse-ear cress).